Here is a 600-residue protein sequence, read N- to C-terminus: MTELSRIRNFSIIAHIDHGKSTLADRFIQICGGLTDREMAEQVLDSMDLERERGITIKAQSVTLNYKAKDGETYKLNFIDTPGHVDFSYEVSRSLYACEGALLVVDAGQGVEAQSVANCYTAIEQGLEVVPVLNKMDLPQAEPERVAAEIEDIIGIDASDAVRCSAKSGLGVEDVLEDLIKKIPPPKGDRSAPLQALIIDSWFDNYLGVVSLVRVTEGVLRKGDKIVIKSTKKAWNADKVGVFNPKPTDTDVLEAGDVGFVVAGIKDIHGAPVGDTIVHQKFAEETPMLPGFKKVKPQVYAGLFPVSADDYDDFRDALEKLTLNDASLFFEPENSDALGFGFRCGFLGMLHMEIIQERLEREYDLDLITTAPTVIYEVVTKQGETLSVDNPSRLPDIGSIEEMREPIVEANILVPQEHLGNVIALCEEKRGVQKNMHFMSTQVQLTYELPMAEVVMDFFDRIKSASRGFASLDYHFVRFQSANLVRLDVLINGDRVDALALIVHRDLSHRKGRQLIEKMKELIPRQMFDIAIQAAIGTQVVSRVTVKALRKNVTAKCYGGDVSRKKKLLQKQKEGKKRMKQLGNVEVPQEAFLAVLKVDN.

In terms of domain architecture, tr-type G spans 5 to 187 (SRIRNFSIIA…DLIKKIPPPK (183 aa)). GTP-binding positions include 17 to 22 (DHGKST) and 134 to 137 (NKMD).

This sequence belongs to the TRAFAC class translation factor GTPase superfamily. Classic translation factor GTPase family. LepA subfamily.

The protein resides in the cell inner membrane. The enzyme catalyses GTP + H2O = GDP + phosphate + H(+). In terms of biological role, required for accurate and efficient protein synthesis under certain stress conditions. May act as a fidelity factor of the translation reaction, by catalyzing a one-codon backward translocation of tRNAs on improperly translocated ribosomes. Back-translocation proceeds from a post-translocation (POST) complex to a pre-translocation (PRE) complex, thus giving elongation factor G a second chance to translocate the tRNAs correctly. Binds to ribosomes in a GTP-dependent manner. This Marinobacter nauticus (strain ATCC 700491 / DSM 11845 / VT8) (Marinobacter aquaeolei) protein is Elongation factor 4.